Here is a 156-residue protein sequence, read N- to C-terminus: Small ribosomal subunit protein uS7 (156 aa).

It belongs to the universal ribosomal protein uS7 family. As to quaternary structure, part of the 30S ribosomal subunit. Contacts proteins S9 and S11.

Functionally, one of the primary rRNA binding proteins, it binds directly to 16S rRNA where it nucleates assembly of the head domain of the 30S subunit. Is located at the subunit interface close to the decoding center, probably blocks exit of the E-site tRNA. This is Small ribosomal subunit protein uS7 from Sinorhizobium medicae (strain WSM419) (Ensifer medicae).